A 390-amino-acid polypeptide reads, in one-letter code: 1-deoxy-D-xylulose 5-phosphate reductoisomerase (390 aa).

The NADPH site is built by Thr-10, Gly-11, Ser-12, Val-13, Gly-38, Asn-40, and Asn-123. Lys-124 contacts 1-deoxy-D-xylulose 5-phosphate. Glu-125 provides a ligand contact to NADPH. Residue Asp-149 coordinates Mn(2+). Residues Ser-150, Glu-151, Ser-175, and His-198 each coordinate 1-deoxy-D-xylulose 5-phosphate. Position 151 (Glu-151) interacts with Mn(2+). Position 204 (Gly-204) interacts with NADPH. The 1-deoxy-D-xylulose 5-phosphate site is built by Ser-211, Asn-216, Lys-217, and Glu-220. Glu-220 lines the Mn(2+) pocket.

This sequence belongs to the DXR family. Mg(2+) serves as cofactor. The cofactor is Mn(2+).

The enzyme catalyses 2-C-methyl-D-erythritol 4-phosphate + NADP(+) = 1-deoxy-D-xylulose 5-phosphate + NADPH + H(+). It participates in isoprenoid biosynthesis; isopentenyl diphosphate biosynthesis via DXP pathway; isopentenyl diphosphate from 1-deoxy-D-xylulose 5-phosphate: step 1/6. Functionally, catalyzes the NADPH-dependent rearrangement and reduction of 1-deoxy-D-xylulose-5-phosphate (DXP) to 2-C-methyl-D-erythritol 4-phosphate (MEP). This chain is 1-deoxy-D-xylulose 5-phosphate reductoisomerase, found in Paracoccus denitrificans (strain Pd 1222).